A 346-amino-acid chain; its full sequence is Trans-enoyl reductase FFUJ_12240 (346 aa).

40–43 is an NADP(+) binding site; it reads HDAK. 124-131 contacts substrate; sequence LAIATAGL. Residues 157–160, 180–183, Tyr198, and 245–246 each bind NADP(+); these read ATAT, SPSN, and LE. 266-270 lines the substrate pocket; the sequence is APSIL. An NADP(+)-binding site is contributed by 335–336; it reads VH.

Belongs to the zinc-containing alcohol dehydrogenase family.

Trans-enoyl reductase; part of the gene cluster that mediates the biosynthesis of fujikurins A-D, secondary metabolites playing a role during rice infection. The polyketide synthase PKS19 acts with the trans-enoyl reductase FFUJ_12240 and the polyketide transferase FFUJ_12241 to produce fujikurins, however, the biosynthesis pathway has not been identified yet. The chain is Trans-enoyl reductase FFUJ_12240 from Gibberella fujikuroi (strain CBS 195.34 / IMI 58289 / NRRL A-6831) (Bakanae and foot rot disease fungus).